A 289-amino-acid chain; its full sequence is Formamidopyrimidine-DNA glycosylase (289 aa).

Pro2 functions as the Schiff-base intermediate with DNA in the catalytic mechanism. Residue Glu3 is the Proton donor of the active site. Catalysis depends on Lys61, which acts as the Proton donor; for beta-elimination activity. Residues His97, Arg119, and Lys168 each contribute to the DNA site. An FPG-type zinc finger spans residues 254–288; that stretch reads NAYGRAGKPCPRCGEPIVRVQWTNRSSHFCPQCQS. Catalysis depends on Arg278, which acts as the Proton donor; for delta-elimination activity.

The protein belongs to the FPG family. In terms of assembly, monomer. Zn(2+) is required as a cofactor.

It catalyses the reaction Hydrolysis of DNA containing ring-opened 7-methylguanine residues, releasing 2,6-diamino-4-hydroxy-5-(N-methyl)formamidopyrimidine.. The catalysed reaction is 2'-deoxyribonucleotide-(2'-deoxyribose 5'-phosphate)-2'-deoxyribonucleotide-DNA = a 3'-end 2'-deoxyribonucleotide-(2,3-dehydro-2,3-deoxyribose 5'-phosphate)-DNA + a 5'-end 5'-phospho-2'-deoxyribonucleoside-DNA + H(+). Involved in base excision repair of DNA damaged by oxidation or by mutagenic agents. Acts as a DNA glycosylase that recognizes and removes damaged bases. Has a preference for oxidized purines, such as 7,8-dihydro-8-oxoguanine (8-oxoG). Has AP (apurinic/apyrimidinic) lyase activity and introduces nicks in the DNA strand. Cleaves the DNA backbone by beta-delta elimination to generate a single-strand break at the site of the removed base with both 3'- and 5'-phosphates. This chain is Formamidopyrimidine-DNA glycosylase, found in Corynebacterium urealyticum (strain ATCC 43042 / DSM 7109).